A 444-amino-acid chain; its full sequence is Acetyl-CoA--deacetylcephalosporin C acetyltransferase (444 aa).

The propeptide occupies 1–71; the sequence is MLPSAQVARL…PQIANRFEAS (71 aa). The AB hydrolase-1 domain occupies 112–425; that stretch reads VIVCHTLTSS…DTNEGHDFFV (314 aa). Active-site residues include Ser208 and His421.

This sequence belongs to the AB hydrolase superfamily. MetX family. As to quaternary structure, heterodimer of chain I and chain II.

It carries out the reaction deacetylcephalosporin C + acetyl-CoA = cephalosporin C + CoA. It participates in antibiotic biosynthesis; cephalosporin C biosynthesis. Functionally, catalyzes the conversion of deacetylcephalosporin C to cephalosporin C. This Hapsidospora chrysogena (Acremonium chrysogenum) protein is Acetyl-CoA--deacetylcephalosporin C acetyltransferase (CEFG).